Reading from the N-terminus, the 149-residue chain is Putative pre-16S rRNA nuclease (149 aa).

The protein belongs to the YqgF nuclease family.

It localises to the cytoplasm. Functionally, could be a nuclease involved in processing of the 5'-end of pre-16S rRNA. This chain is Putative pre-16S rRNA nuclease, found in Pseudoalteromonas translucida (strain TAC 125).